Consider the following 358-residue polypeptide: Histamine H2 receptor (358 aa).

The Extracellular segment spans residues 1–22 (MEPNGTVHSCCLDSMALKVTIS). An N-linked (GlcNAc...) asparagine glycan is attached at N4. The helical transmembrane segment at 23–44 (VVLTTLILITIAGNVVVCLAVS) threads the bilayer. Topologically, residues 45–57 (LNRRLRSLTNCFI) are cytoplasmic. A helical membrane pass occupies residues 58–81 (VSLAATDLLLGLLVLPFSAIYQLS). At 82-92 (FTWSFGHVFCN) the chain is on the extracellular side. An intrachain disulfide couples C91 to C173. The helical transmembrane segment at 93–114 (IYTSLDVMLCTASILNLFMISL) threads the bilayer. Residues 115-134 (DRYCAVTDPLRYPVLVTPVR) lie on the Cytoplasmic side of the membrane. The chain crosses the membrane as a helical span at residues 135–159 (VAISLVFIWVISITLSFLSIHLGWN). At 160-179 (SRNGTRGGNDTFKCKVQVNE) the chain is on the extracellular side. The helical transmembrane segment at 180-203 (VYGLVDGLVTFYLPLLIMCVTYYR) threads the bilayer. Residues 204–233 (IFKIAREQAKRINHISSWKAATIREHKATV) are Cytoplasmic-facing. The helical transmembrane segment at 234–257 (TLAAVMGAFIICWFPYFTAFVYRG) threads the bilayer. Topologically, residues 258 to 266 (LRGDDAINE) are extracellular. The chain crosses the membrane as a helical span at residues 267–288 (AVEGIVLWLGYANSALNPILYA). Residues 289–358 (ALNRDFRTAY…LTHPQGNPIR (70 aa)) lie on the Cytoplasmic side of the membrane. A lipid anchor (S-palmitoyl cysteine) is attached at C304.

This sequence belongs to the G-protein coupled receptor 1 family.

Its subcellular location is the cell membrane. In terms of biological role, the H2 subclass of histamine receptors mediates gastric acid secretion. The activity of this receptor is mediated by G proteins which activate adenylyl cyclase. This Rattus norvegicus (Rat) protein is Histamine H2 receptor (Hrh2).